We begin with the raw amino-acid sequence, 99 residues long: Large ribosomal subunit protein eL21 (99 aa).

It belongs to the eukaryotic ribosomal protein eL21 family.

This chain is Large ribosomal subunit protein eL21, found in Methanocella arvoryzae (strain DSM 22066 / NBRC 105507 / MRE50).